A 394-amino-acid chain; its full sequence is NAD(P)H-quinone oxidoreductase subunit H (394 aa).

It belongs to the complex I 49 kDa subunit family. In terms of assembly, NDH-1 can be composed of about 15 different subunits; different subcomplexes with different compositions have been identified which probably have different functions.

It localises to the cellular thylakoid membrane. The catalysed reaction is a plastoquinone + NADH + (n+1) H(+)(in) = a plastoquinol + NAD(+) + n H(+)(out). It catalyses the reaction a plastoquinone + NADPH + (n+1) H(+)(in) = a plastoquinol + NADP(+) + n H(+)(out). In terms of biological role, NDH-1 shuttles electrons from an unknown electron donor, via FMN and iron-sulfur (Fe-S) centers, to quinones in the respiratory and/or the photosynthetic chain. The immediate electron acceptor for the enzyme in this species is believed to be plastoquinone. Couples the redox reaction to proton translocation, and thus conserves the redox energy in a proton gradient. Cyanobacterial NDH-1 also plays a role in inorganic carbon-concentration. The chain is NAD(P)H-quinone oxidoreductase subunit H from Synechococcus sp. (strain RCC307).